Reading from the N-terminus, the 218-residue chain is Monomethylamine corrinoid protein 1 (218 aa).

The 91-residue stretch at 1–91 (MANQEIFDKL…ELEKTKVEGE (91 aa)) folds into the B12-binding N-terminal domain. The B12-binding domain maps to 94–218 (TGLAITFVAE…AAKVALNIMK (125 aa)). His-107 lines the methylcob(III)alamin pocket.

It belongs to the methylamine corrinoid protein family. As to quaternary structure, can form a complex with MtmB.

Its pathway is one-carbon metabolism; methanogenesis from methylamine. Acts as a methyl group carrier between MtmB and MtbA. The sequence is that of Monomethylamine corrinoid protein 1 (mtmC1) from Methanosarcina acetivorans (strain ATCC 35395 / DSM 2834 / JCM 12185 / C2A).